The sequence spans 248 residues: 2-acetamido-2-deoxy-D-galactose-binding seed lectin 2 (248 aa).

Residue asparagine 119 is glycosylated (N-linked (GlcNAc...) asparagine; partial). Glutamate 128 and aspartate 130 together coordinate Mn(2+). Ca(2+) is bound by residues aspartate 130, tyrosine 132, asparagine 134, and aspartate 138. Aspartate 138 and histidine 144 together coordinate Mn(2+).

The protein belongs to the leguminous lectin family.

The sequence is that of 2-acetamido-2-deoxy-D-galactose-binding seed lectin 2 from Cytisus scoparius (Scotch broom).